A 746-amino-acid chain; its full sequence is Polyribonucleotide nucleotidyltransferase (746 aa).

Residues Asp520 and Asp526 each contribute to the Mg(2+) site. The region spanning Pro586–Ile648 is the KH domain. The S1 motif domain occupies Gly657 to Val729.

The protein belongs to the polyribonucleotide nucleotidyltransferase family. It depends on Mg(2+) as a cofactor.

The protein resides in the cytoplasm. The catalysed reaction is RNA(n+1) + phosphate = RNA(n) + a ribonucleoside 5'-diphosphate. Functionally, involved in mRNA degradation. Catalyzes the phosphorolysis of single-stranded polyribonucleotides processively in the 3'- to 5'-direction. The chain is Polyribonucleotide nucleotidyltransferase from Kineococcus radiotolerans (strain ATCC BAA-149 / DSM 14245 / SRS30216).